The chain runs to 1155 residues: RHO1 GDP-GTP exchange protein 1 (1155 aa).

Methionine 1 bears the N-acetylmethionine mark. Positions 100 to 143 are enriched in polar residues; that stretch reads NSSPQSFTGDQISPTNKKISINDSTRQDKGNSCTTTSSPSQKRS. The segment at 100-249 is disordered; that stretch reads NSSPQSFTGD…HSRSKSSPVS (150 aa). Residues serine 154 and serine 155 each carry the phosphoserine modification. Over residues 155-167 the composition is skewed to low complexity; sequence SPSLLSFSKNSGS. Residue threonine 180 is modified to Phosphothreonine. The segment covering 190-227 has biased composition (low complexity); the sequence is LHSSFNGKHSSSSTSSLFALESLKTQNRRSSNSSNHSS. The segment covering 228–243 has biased composition (basic residues); sequence QYRRHTNQHQRHHSRS. Residue serine 433 is modified to Phosphoserine. Positions 464–651 constitute a DH domain; it reads KRQEAIYELF…KDLMKRIDRA (188 aa). The region spanning 842 to 1137 is the CNH domain; that stretch reads TNRVNDVLIC…RMLKSYAKKI (296 aa).

Its function is as follows. Stimulates the exchange of RHO1 GDP-bound form into GTP-bound form. The protein is RHO1 GDP-GTP exchange protein 1 (ROM1) of Saccharomyces cerevisiae (strain ATCC 204508 / S288c) (Baker's yeast).